Consider the following 142-residue polypeptide: HTH-type transcriptional regulator MntR (142 aa).

In terms of domain architecture, HTH dtxR-type spans 1-63 (MPTPSMEDYI…YEKYRGLVLT (63 aa)). Mn(2+) is bound by residues Asp8, Glu11, His77, Glu99, Glu102, and His103.

Belongs to the DtxR/MntR family. In terms of assembly, homodimer.

Its subcellular location is the cytoplasm. DNA binding is strongly activated by Mn(2+). Functionally, central regulator of manganese homeostasis. The protein is HTH-type transcriptional regulator MntR of Bacillus cereus (strain ATCC 14579 / DSM 31 / CCUG 7414 / JCM 2152 / NBRC 15305 / NCIMB 9373 / NCTC 2599 / NRRL B-3711).